The following is a 91-amino-acid chain: Large ribosomal subunit protein eL34 (91 aa).

Residues 48–71 are disordered; the sequence is RGRPVEMRKLPKTKKRPERPYPHL.

Belongs to the eukaryotic ribosomal protein eL34 family.

This is Large ribosomal subunit protein eL34 (rpl34e) from Pyrococcus abyssi (strain GE5 / Orsay).